Reading from the N-terminus, the 70-residue chain is Uteroglobin (70 aa).

Belongs to the secretoglobin family. Antiparallel homodimer; disulfide-linked. Interaction with LMBR1L is controversial. In terms of tissue distribution, club cells (nonciliated cells of the surface epithelium of the pulmonary airways).

The protein localises to the secreted. Functionally, binds phosphatidylcholine, phosphatidylinositol, polychlorinated biphenyls (PCB) and weakly progesterone, potent inhibitor of phospholipase A2. The polypeptide is Uteroglobin (SCGB1A1) (Macaca fuscata fuscata (Japanese macaque)).